The chain runs to 885 residues: Cytosolic carboxypeptidase-like protein 5 (885 aa).

The region spanning 157 to 570 (YPFSYSDCQD…AMAIAALDMA (414 aa)) is the Peptidase M14 domain. Residues His252 and Glu255 each contribute to the Zn(2+) site. The tract at residues 343–402 (NSQSPSEHQHSSHLPPDAPLSDPEKADSLQNRAHLGRSSSGDKPEAWTQTEVAEQKPNSV) is disordered. Over residues 388–402 (AWTQTEVAEQKPNSV) the composition is skewed to polar residues. Position 434 (His434) interacts with Zn(2+). Catalysis depends on Glu516, which acts as the Proton donor/acceptor. 2 disordered regions span residues 605-733 (TTVN…LASS) and 783-839 (RLQA…PRPC). Residues 620-640 (PPRSNNGLPVSCSENTLSRAR) show a composition bias toward polar residues. 2 stretches are compositionally biased toward low complexity: residues 641–666 (SFSTGTSAGGSSSSQQNSPQMKNSPS) and 714–733 (PTSSSLAPSPTPASSNLASS). Ser840 is subject to Phosphoserine.

It belongs to the peptidase M14 family. It depends on Zn(2+) as a cofactor.

The protein resides in the cytoplasm. The protein localises to the cytosol. It localises to the nucleus. It is found in the cytoskeleton. Its subcellular location is the spindle. The protein resides in the midbody. The enzyme catalyses gamma-L-glutamyl-L-glutamyl-[protein] + H2O = L-glutamyl-[protein] + L-glutamate. It carries out the reaction (L-glutamyl)(n+1)-gamma-L-glutamyl-L-glutamyl-[protein] + H2O = (L-glutamyl)(n)-gamma-L-glutamyl-L-glutamyl-[protein] + L-glutamate. It catalyses the reaction C-terminal L-alpha-aminoacyl-L-glutamyl-[tubulin] + H2O = C-terminal L-alpha-aminoacyl-[tubulin] + L-glutamate. The catalysed reaction is C-terminal L-alpha-aminoacyl-L-glutamyl-L-glutamyl-[tubulin] + H2O = C-terminal L-alpha-aminoacyl-L-glutamyl-[tubulin] + L-glutamate. Its function is as follows. Metallocarboxypeptidase that mediates deglutamylation of tubulin and non-tubulin target proteins. Catalyzes the removal of polyglutamate side chains present on the gamma-carboxyl group of glutamate residues within the C-terminal tail of alpha- and beta-tubulin. Cleaves alpha- and gamma-linked polyglutamate tubulin side-chain, as well as the branching point glutamate. Also catalyzes the removal of alpha-linked glutamate residues from the carboxy-terminus of alpha-tubulin. Mediates deglutamylation of nucleotidyltransferase CGAS, leading to CGAS antiviral defense response activation. This Bos taurus (Bovine) protein is Cytosolic carboxypeptidase-like protein 5 (AGBL5).